Here is a 246-residue protein sequence, read N- to C-terminus: UDP-N-acetyl-D-mannosaminuronic acid transferase (246 aa).

It belongs to the glycosyltransferase 26 family.

It catalyses the reaction UDP-N-acetyl-alpha-D-mannosaminouronate + N-acetyl-alpha-D-glucosaminyl-di-trans,octa-cis-undecaprenyl diphosphate = beta-D-ManNAcA-(1-&gt;4)-alpha-D-GlcNAc-di-trans,octa-cis-undecaprenyl diphosphate + UDP + H(+). It participates in bacterial outer membrane biogenesis; enterobacterial common antigen biosynthesis. Catalyzes the synthesis of Und-PP-GlcNAc-ManNAcA (Lipid II), the second lipid-linked intermediate involved in enterobacterial common antigen (ECA) synthesis. The chain is UDP-N-acetyl-D-mannosaminuronic acid transferase from Salmonella dublin (strain CT_02021853).